The sequence spans 460 residues: ATP synthase subunit beta (460 aa).

150-157 (GGAGVGKT) is an ATP binding site.

It belongs to the ATPase alpha/beta chains family. F-type ATPases have 2 components, CF(1) - the catalytic core - and CF(0) - the membrane proton channel. CF(1) has five subunits: alpha(3), beta(3), gamma(1), delta(1), epsilon(1). CF(0) has three main subunits: a(1), b(2) and c(9-12). The alpha and beta chains form an alternating ring which encloses part of the gamma chain. CF(1) is attached to CF(0) by a central stalk formed by the gamma and epsilon chains, while a peripheral stalk is formed by the delta and b chains.

It localises to the cell inner membrane. The enzyme catalyses ATP + H2O + 4 H(+)(in) = ADP + phosphate + 5 H(+)(out). Its function is as follows. Produces ATP from ADP in the presence of a proton gradient across the membrane. The catalytic sites are hosted primarily by the beta subunits. The chain is ATP synthase subunit beta from Enterobacter sp. (strain 638).